The sequence spans 250 residues: Maleate isomerase (250 aa).

Substrate-binding positions include N15, 80 to 82, Y137, and N167; that span reads CLV. C80 acts as the Nucleophile in catalysis. C80 carries the S-(2-succinyl)cysteine modification. C198 acts as the Proton donor in catalysis. 199 to 200 lines the substrate pocket; sequence VQ.

The protein belongs to the maleate isomerase family. In terms of assembly, homodimer.

The enzyme catalyses maleate = fumarate. It participates in cofactor degradation; nicotinate degradation. Functionally, catalyzes cis-trans isomerization of the C2-C3 double bond in maleate to yield fumarate in the aerobic nicotinate degradation pathway. This chain is Maleate isomerase, found in Pseudomonas putida (strain ATCC 47054 / DSM 6125 / CFBP 8728 / NCIMB 11950 / KT2440).